The chain runs to 237 residues: MAEYLASIFGTEKDKVNCSFYFKIGACRHGDRCSRLHNKPTFSQTIALLNIYRNPQNSSQSADGLRCAVSDVEMQEHYDEFFEEVFTEMEEKYGEVEEMNVCDNLGDHLVGNVYVKFRREEDAEKAVIDLNNRWFNGQPIHAELSPVTDFREACCRQYEMGECTRGGFCNFMHLKPISRELRRELYGRRRKKHRSRSRSRERRSRSRDRGRGGGGGGGGGRERDRRRSRDRERSGRF.

Residue Ala-2 is modified to N-acetylalanine. The C3H1-type 1 zinc-finger motif lies at 12–40; it reads EKDKVNCSFYFKIGACRHGDRCSRLHNKP. Lys-39 carries the post-translational modification N6-methyllysine. 2 positions are modified to phosphoserine: Ser-61 and Ser-145. Residues 65–147 form the RRM domain; sequence LRCAVSDVEM…QPIHAELSPV (83 aa). The segment at 149–176 adopts a C3H1-type 2 zinc-finger fold; sequence DFREACCRQYEMGECTRGGFCNFMHLKP. Omega-N-methylarginine is present on Arg-165. A disordered region spans residues 185 to 237; it reads LYGRRRKKHRSRSRSRERRSRSRDRGRGGGGGGGGGRERDRRRSRDRERSGRF. The segment covering 188-208 has biased composition (basic residues); that stretch reads RRRKKHRSRSRSRERRSRSRD. The segment covering 220–237 has biased composition (basic and acidic residues); it reads GRERDRRRSRDRERSGRF.

This sequence belongs to the splicing factor SR family. Identified in the spliceosome C complex. Heterodimer with U2AF2. Interacts (via RS domain) with PHF5A (via N-terminus). Interacts with ZRANB2. Interacts with SDE2. Interacts with SF3B1.

The protein resides in the nucleus. It localises to the nucleus speckle. In terms of biological role, plays a critical role in both constitutive and enhancer-dependent splicing by mediating protein-protein interactions and protein-RNA interactions required for accurate 3'-splice site selection. Recruits U2 snRNP to the branch point. Directly mediates interactions between U2AF2 and proteins bound to the enhancers and thus may function as a bridge between U2AF2 and the enhancer complex to recruit it to the adjacent intron. The polypeptide is Splicing factor U2AF 35 kDa subunit (U2AF1) (Bos taurus (Bovine)).